A 304-amino-acid chain; its full sequence is MYYGFDMGGTKIELGVFDAELNKVWQKRVPTPRNNYDDLLAMLIDLVHEADAQVGVQGSVGIGVPGIQTGDEGALFTANLPATMGKPLRIDLSQRLQRDVRISNDANCFVLSEAWDAEFRSYPVVLGLILGTGLGGGLVINGRPVDGRNGIAGEFGHLRLPSDALDIIGVDIPRVKCGCGQFGCIENYISGRGFEWLYEHLYGEALPAVTIIRHYRGGEEKALEFVDRFMDLLAACLGNLLTLFDPHLLVLGGGLSNFDEIYQILPTRLPSRLLPIAKLPRIEKARHGDAGGVRGAALLHLMDN.

ATP contacts are provided by residues 4 to 11 and 133 to 140; these read GFDMGGTK and GLGGGLVI. Positions 157, 177, 179, and 184 each coordinate Zn(2+).

The protein belongs to the ROK (NagC/XylR) family. NagK subfamily.

It catalyses the reaction N-acetyl-D-glucosamine + ATP = N-acetyl-D-glucosamine 6-phosphate + ADP + H(+). It participates in cell wall biogenesis; peptidoglycan recycling. In terms of biological role, catalyzes the phosphorylation of N-acetyl-D-glucosamine (GlcNAc) derived from cell-wall degradation, yielding GlcNAc-6-P. This Pectobacterium atrosepticum (strain SCRI 1043 / ATCC BAA-672) (Erwinia carotovora subsp. atroseptica) protein is N-acetyl-D-glucosamine kinase.